A 428-amino-acid polypeptide reads, in one-letter code: D-amino acid dehydrogenase (428 aa).

Residue 3–17 (VVVLGSGVVGVTSAY) participates in FAD binding.

The protein belongs to the DadA oxidoreductase family. Requires FAD as cofactor.

It carries out the reaction a D-alpha-amino acid + A + H2O = a 2-oxocarboxylate + AH2 + NH4(+). It functions in the pathway amino-acid degradation; D-alanine degradation; NH(3) and pyruvate from D-alanine: step 1/1. In terms of biological role, oxidative deamination of D-amino acids. The sequence is that of D-amino acid dehydrogenase from Paraburkholderia phymatum (strain DSM 17167 / CIP 108236 / LMG 21445 / STM815) (Burkholderia phymatum).